Consider the following 149-residue polypeptide: Sec-independent protein translocase protein TatB (149 aa).

The chain crosses the membrane as a helical span at residues 1–21; the sequence is MFDIGFTELIVIGIVALVVVG. The interval 92–149 is disordered; it reads VDMLDKSVRNEPQNAQTPPQTADAEPAQPDVRQQTLPLEEPDQNRAAGEPSSTSTRPA. Over residues 101–111 the composition is skewed to polar residues; sequence NEPQNAQTPPQ.

The protein belongs to the TatB family. The Tat system comprises two distinct complexes: a TatABC complex, containing multiple copies of TatA, TatB and TatC subunits, and a separate TatA complex, containing only TatA subunits. Substrates initially bind to the TatABC complex, which probably triggers association of the separate TatA complex to form the active translocon.

The protein localises to the cell inner membrane. Its function is as follows. Part of the twin-arginine translocation (Tat) system that transports large folded proteins containing a characteristic twin-arginine motif in their signal peptide across membranes. Together with TatC, TatB is part of a receptor directly interacting with Tat signal peptides. TatB may form an oligomeric binding site that transiently accommodates folded Tat precursor proteins before their translocation. The protein is Sec-independent protein translocase protein TatB of Thiobacillus denitrificans (strain ATCC 25259 / T1).